We begin with the raw amino-acid sequence, 122 residues long: UPF0382 membrane protein SERP0230 (122 aa).

Helical transmembrane passes span 3 to 23 (VFII…AFGA), 46 to 66 (MYHG…SINV), 69 to 89 (AGWL…FLAL), and 98 to 118 (ITPI…IATL).

It belongs to the UPF0382 family.

The protein localises to the cell membrane. This Staphylococcus epidermidis (strain ATCC 35984 / DSM 28319 / BCRC 17069 / CCUG 31568 / BM 3577 / RP62A) protein is UPF0382 membrane protein SERP0230.